The primary structure comprises 109 residues: Iron-sulfur cluster assembly protein CyaY (109 aa).

Belongs to the frataxin family.

Its function is as follows. Involved in iron-sulfur (Fe-S) cluster assembly. May act as a regulator of Fe-S biogenesis. The chain is Iron-sulfur cluster assembly protein CyaY from Verminephrobacter eiseniae (strain EF01-2).